The following is a 299-amino-acid chain: MAEEQARHVKNGLECIRALKAEPIGSLAIEEAMAAWSEISDNPGQERATCREEKAGSSGLSKPCLSAIGSTEGGAPRIRGQGPGESDDDAETLGIPPRNLQASSTGLQCYYVYDHSGEAVKGIQDADSIMVQSGLDGDSTLSGGDNESENSDVDIGEPDTEGYAITDRGSAPISMGFRASDVETAEGGEIHELLRLQSRGNNFPKLGKTLNVPPPPDPGRASTSETPIKKGHRREISLIWNGDRVFIDRWCNPMCSKVTLGTIRARCTCGECPRVCEQCRTDTGVDTRIWYHNLPEIPE.

The disordered stretch occupies residues 41 to 99 (DNPGQERATCREEKAGSSGLSKPCLSAIGSTEGGAPRIRGQGPGESDDDAETLGIPPRN). The interval 110–120 (YYVYDHSGEAV) is interaction with host STAT1. The span at 134–145 (GLDGDSTLSGGD) shows a compositional bias: low complexity. A disordered region spans residues 134–168 (GLDGDSTLSGGDNESENSDVDIGEPDTEGYAITDR). Acidic residues predominate over residues 146-160 (NESENSDVDIGEPDT). Residues H232, C251, C255, C267, C269, C272, C276, and C279 each coordinate Zn(2+).

It belongs to the paramyxoviruses V protein family. As to quaternary structure, interacts with host IFIH1/MDA5 and DHX58/LGP2; these interactions are involved in the inhibition of the host type I interferon signaling pathway. Interacts with host TYK2; this interaction inhibits the type I interferon signaling pathway without affecting the type II pathway. Interacts with host IRF7; this interaction inhibits IRF7 translocation to the nucleus. Interacts with host CHUK. Interacts with host RELA/p65; this interaction inhibits the nuclear translocation of NF-KappaB. Interacts (via N-terminus) with host STAT1 and JAK1; these interactions inhibit STAT1 phosphorylation by Jak1 and thereby the type I interferon signaling pathway. Interacts (via C-terminus) with host STAT2; this interaction is involved in the inhibition of the host type I interferon signaling pathway. Forms a complex with host PPP1CA and PPP1CC; this interaction prevents dephosphorylation of host IFIH1/MDA5 and leads to the inhibition of the host type I interferon signaling pathway. Interacts with host IRF9; this interaction prevents the binding of IRF9 to STAT2 and thereby the type I interferon signaling pathway. Interacts with host RIGI regulatory protein (via CARDs domain) and host TRIM25 (via SPRY domain); these interactions prevent TRIM25-mediated ubiquitination of RIG-I and disrupts downstream RIG-I signaling.

It is found in the host cytoplasm. In terms of biological role, plays an essential role in the inhibition of host immune response. Prevents the establishment of cellular antiviral state by blocking interferon-alpha/beta (IFN-alpha/beta) production and signaling pathway. Interacts with host IFIH1/MDA5 and DHX58/LGP2 to inhibit the transduction pathway involved in the activation of IFN-beta promoter, thus protecting the virus against cell antiviral state. Blocks the type I interferon signaling pathway by interacting with host TYK2 and thereby inhibiting downstream STAT1 and STAT2 phosphorylation. Blocks the type I interferon signaling pathway by disrupting the RIG-I signaling pathway. Moderately affects the type II interferon signaling. Prevents PP1alpha/gamma-mediated dephosphorylation of host IFIH1/MDA5 and thus blocks its activation. The chain is Non-structural protein V (P/V) from Measles virus (strain Edmonston) (MeV).